The chain runs to 220 residues: Claudin-6 (220 aa).

Over 1–7 (MASAGMQ) the chain is Cytoplasmic. The chain crosses the membrane as a helical span at residues 8 to 28 (ILGVVLTLLGWVNGLVSCALP). Residues 29–81 (MWKVTAFIGNSIVVAQVVWEGLWMSCVVQSTGQMQCKVYDSLLALPQDLQAAR) lie on the Extracellular side of the membrane. The helical transmembrane segment at 82 to 102 (ALCVIALLVALFGLLVYLAGA) threads the bilayer. At 103-116 (KCTTCVEEKDSKAR) the chain is on the cytoplasmic side. The chain crosses the membrane as a helical span at residues 117 to 137 (LVLTSGIVFVISGVLTLIPVC). The Extracellular portion of the chain corresponds to 138 to 160 (WTAHAIIRDFYNPLVAEAQKREL). Residues 161–181 (GASLYLGWAASGLLLLGGGLL) form a helical membrane-spanning segment. Residues 182–220 (CCTCPSGGSQGPSHYMARYSTSAPAISRGPSEYPTKNYV) are Cytoplasmic-facing. Phosphoserine is present on residues serine 201, serine 203, serine 208, and serine 212. The segment at 219-220 (YV) is interactions with TJP1, TJP2 and TJP3.

The protein belongs to the claudin family. Directly interacts with TJP1/ZO-1, TJP2/ZO-2 and TJP3/ZO-3. Interacts with CLDN1, CD81 and OCLN. Expressed in the liver, in peripheral blood mononuclear cells and hepatocarcinoma cell lines.

It is found in the cell junction. The protein localises to the tight junction. The protein resides in the cell membrane. Plays a major role in tight junction-specific obliteration of the intercellular space. In terms of biological role, (Microbial infection) Acts as a receptor for hepatitis C virus (HCV) entry into hepatic cells. The polypeptide is Claudin-6 (CLDN6) (Homo sapiens (Human)).